We begin with the raw amino-acid sequence, 88 residues long: ATP synthase F(0) complex subunit f, mitochondrial (88 aa).

The residue at position 2 (alanine 2) is an N-acetylalanine. The residue at position 3 (serine 3) is a Phosphoserine. Residue lysine 16 is modified to N6-acetyllysine. A helical membrane pass occupies residues 62-79 (MVLAAYVVFSYCISYKEL).

This sequence belongs to the ATPase F chain family. As to quaternary structure, component of the ATP synthase complex composed at least of ATP5F1A/subunit alpha, ATP5F1B/subunit beta, ATP5MC1/subunit c (homooctomer), MT-ATP6/subunit a, MT-ATP8/subunit 8, ATP5ME/subunit e, ATP5MF/subunit f, ATP5MG/subunit g, ATP5MK/subunit k, ATP5MJ/subunit j, ATP5F1C/subunit gamma, ATP5F1D/subunit delta, ATP5F1E/subunit epsilon, ATP5PF/subunit F6, ATP5PB/subunit b, ATP5PD/subunit d, ATP5PO/subunit OSCP. ATP synthase complex consists of a soluble F(1) head domain (subunits alpha(3) and beta(3)) - the catalytic core - and a membrane F(0) domain - the membrane proton channel (subunits c, a, 8, e, f, g, k and j). These two domains are linked by a central stalk (subunits gamma, delta, and epsilon) rotating inside the F1 region and a stationary peripheral stalk (subunits F6, b, d, and OSCP).

It is found in the mitochondrion. Its subcellular location is the mitochondrion inner membrane. Functionally, subunit f, of the mitochondrial membrane ATP synthase complex (F(1)F(0) ATP synthase or Complex V) that produces ATP from ADP in the presence of a proton gradient across the membrane which is generated by electron transport complexes of the respiratory chain. ATP synthase complex consist of a soluble F(1) head domain - the catalytic core - and a membrane F(1) domain - the membrane proton channel. These two domains are linked by a central stalk rotating inside the F(1) region and a stationary peripheral stalk. During catalysis, ATP synthesis in the catalytic domain of F(1) is coupled via a rotary mechanism of the central stalk subunits to proton translocation. In vivo, can only synthesize ATP although its ATP hydrolase activity can be activated artificially in vitro. Part of the complex F(0) domain. This chain is ATP synthase F(0) complex subunit f, mitochondrial, found in Rattus norvegicus (Rat).